The following is a 1043-amino-acid chain: Unconventional myosin-Ia (1043 aa).

The Myosin motor domain maps to V8–R694. ATP is bound at residue G101–T108. Residues V571–D593 form an actin-binding region. IQ domains follow at residues L697–Q719, M720–K742, and I743–A772. The 185-residue stretch at K858–V1042 folds into the TH1 domain.

Belongs to the TRAFAC class myosin-kinesin ATPase superfamily. Myosin family. In terms of processing, phosphorylated by ALPK1.

Functionally, involved in directing the movement of organelles along actin filaments. The protein is Unconventional myosin-Ia (Myo1a) of Mus musculus (Mouse).